Reading from the N-terminus, the 309-residue chain is Probable manganese-dependent inorganic pyrophosphatase (309 aa).

Mn(2+) contacts are provided by H9, D13, D15, D75, H97, and D149.

The protein belongs to the PPase class C family. Mn(2+) serves as cofactor.

It localises to the cytoplasm. It catalyses the reaction diphosphate + H2O = 2 phosphate + H(+). This Bacillus cereus (strain ATCC 10987 / NRS 248) protein is Probable manganese-dependent inorganic pyrophosphatase.